The primary structure comprises 632 residues: Probable potassium transport system protein Kup 1 (632 aa).

12 helical membrane passes run 17–37, 60–80, 106–126, 146–166, 175–195, 210–230, 254–274, 292–312, 344–364, 370–390, 401–421, and 426–446; these read LFYLALGSVGVVYGDIGTSPL, LISLMIWALTIIVTIKYVLFL, TAILMLLGLMGAALFLGDAMI, LADYIVPISVVILALLFVVQS, FFGPITAVWFLVMAAAGISHI, AVAFLLHEGFYGIVVLGAVFL, WFLLVFPALTLNYLGQGALVL, ALLPVVILATAATIIASQAVI, IFVPSVNAVLFIGVIFLVLGF, LATAYGISVTGAMVVTSIMAF, LPVAVIALAPLVVLEMIFLGA, and IHDGGYIPIMIATAFTVVMWT.

This sequence belongs to the HAK/KUP transporter (TC 2.A.72) family.

The protein localises to the cell inner membrane. The catalysed reaction is K(+)(in) + H(+)(in) = K(+)(out) + H(+)(out). Transport of potassium into the cell. Likely operates as a K(+):H(+) symporter. This is Probable potassium transport system protein Kup 1 from Rhizobium johnstonii (strain DSM 114642 / LMG 32736 / 3841) (Rhizobium leguminosarum bv. viciae).